The following is a 135-amino-acid chain: uncharacterized protein (135 aa).

In terms of domain architecture, HotDog ACOT-type spans 8 to 123; that stretch reads PKGKMVLRTL…IFVYVAVDEF (116 aa).

This sequence belongs to the acyl coenzyme A hydrolase family.

This is an uncharacterized protein from Buchnera aphidicola subsp. Baizongia pistaciae (strain Bp).